Reading from the N-terminus, the 133-residue chain is ATP synthase epsilon chain (133 aa).

It belongs to the ATPase epsilon chain family. In terms of assembly, F-type ATPases have 2 components, CF(1) - the catalytic core - and CF(0) - the membrane proton channel. CF(1) has five subunits: alpha(3), beta(3), gamma(1), delta(1), epsilon(1). CF(0) has three main subunits: a, b and c.

The protein localises to the cell membrane. Functionally, produces ATP from ADP in the presence of a proton gradient across the membrane. The sequence is that of ATP synthase epsilon chain from Clostridium perfringens (strain SM101 / Type A).